The following is a 336-amino-acid chain: Tryptophan--tRNA ligase (336 aa).

ATP contacts are provided by residues 9–11 and 17–18; these read QPS and GN. Residues 10-18 carry the 'HIGH' region motif; that stretch reads PSGTPTIGN. Asp134 is a binding site for L-tryptophan. ATP-binding positions include 146–148, Ile189, and 198–202; these read GDD and KMSKS. Residues 198–202 carry the 'KMSKS' region motif; sequence KMSKS.

This sequence belongs to the class-I aminoacyl-tRNA synthetase family. Homodimer.

The protein localises to the cytoplasm. The enzyme catalyses tRNA(Trp) + L-tryptophan + ATP = L-tryptophyl-tRNA(Trp) + AMP + diphosphate + H(+). In terms of biological role, catalyzes the attachment of tryptophan to tRNA(Trp). This chain is Tryptophan--tRNA ligase, found in Enterococcus faecalis (strain ATCC 700802 / V583).